The chain runs to 122 residues: Large ribosomal subunit protein uL14 (122 aa).

It belongs to the universal ribosomal protein uL14 family. As to quaternary structure, part of the 50S ribosomal subunit. Forms a cluster with proteins L3 and L19. In the 70S ribosome, L14 and L19 interact and together make contacts with the 16S rRNA in bridges B5 and B8.

Functionally, binds to 23S rRNA. Forms part of two intersubunit bridges in the 70S ribosome. This Bordetella parapertussis (strain 12822 / ATCC BAA-587 / NCTC 13253) protein is Large ribosomal subunit protein uL14.